The chain runs to 143 residues: Large ribosomal subunit protein uL11 (143 aa).

Belongs to the universal ribosomal protein uL11 family. As to quaternary structure, part of the ribosomal stalk of the 50S ribosomal subunit. Interacts with L10 and the large rRNA to form the base of the stalk. L10 forms an elongated spine to which L12 dimers bind in a sequential fashion forming a multimeric L10(L12)X complex. In terms of processing, one or more lysine residues are methylated.

In terms of biological role, forms part of the ribosomal stalk which helps the ribosome interact with GTP-bound translation factors. This Burkholderia mallei (strain NCTC 10247) protein is Large ribosomal subunit protein uL11.